Reading from the N-terminus, the 602-residue chain is MINMCYNFENVKKAYEDQLKNYIKNSLIPNLSSHANNEVVKISMKKLANLGFGYLVDSTLSSITGYYKVRDWIEELLKEELQKSGENKCCNIVLCDYPEEFEISMREIPYYVNKVVKFNGVIISASYPCVLSKKHLYICPKCGRIKEVYFSELFWDDKVFCEFCGGKMEFANVMDYENFQELVVQDLSDESEYYGIEKNPIVWYCGAKPYYFGHVKITGIVREVPRSSKSRIYELIVQAINVEKLGVEKSLINLTEEDVKNIKKVAKRGDIIDILADILIPPLLCDDAIVRKAILIQQIAPYLEDIGKINILLVTEVGIDKTAILKRIGNIPGNNFINIAALKEEELATPYDKRSNILGKFYTVCGGVIPRTLGVLCIDDFNENNKLSTKLSEAFERNVLTTNKGSFYCVPAECSFLCACYPKTKFRKFDQKKSIIKQIGISSILLKNFDLIFPIRDIPDKDRDEEVAKYIFLKYINSDNEEIEGYDYVFVDVGGEKIKIDFEFLKKYVVYSRQITPKITDEVIEKISNWYDEMRKNHYITAKQLNTVIKLSIAVARAKLKECVDEDDVKEAIDIIMHYLKQVVYNPKKGIIDVILLYKNKT.

In terms of domain architecture, MCM spans isoleucine 271–phenylalanine 472. Position 315–322 (threonine 315–threonine 322) interacts with ATP.

This sequence belongs to the MCM family.

This is an uncharacterized protein from Methanocaldococcus jannaschii (strain ATCC 43067 / DSM 2661 / JAL-1 / JCM 10045 / NBRC 100440) (Methanococcus jannaschii).